The chain runs to 218 residues: Probable GTP-binding protein EngB (218 aa).

An EngB-type G domain is found at 31-205; that stretch reads SGIEIAFAGR…EQKVTSWYAQ (175 aa). GTP-binding positions include 39–46, 66–70, 84–87, 151–154, and 184–186; these read GRSNAGKS, GRTQL, DLPG, TKAD, and FSS. The Mg(2+) site is built by serine 46 and threonine 68.

It belongs to the TRAFAC class TrmE-Era-EngA-EngB-Septin-like GTPase superfamily. EngB GTPase family. Mg(2+) is required as a cofactor.

Necessary for normal cell division and for the maintenance of normal septation. The chain is Probable GTP-binding protein EngB from Psychromonas ingrahamii (strain DSM 17664 / CCUG 51855 / 37).